We begin with the raw amino-acid sequence, 232 residues long: Octanoyltransferase (232 aa).

A BPL/LPL catalytic domain is found at 44–219 (EHTGDELWVV…QLARQFGLVL (176 aa)). Residues 83–90 (RGGQVTYH), 150–152 (ALG), and 163–165 (GLS) each bind substrate. C181 functions as the Acyl-thioester intermediate in the catalytic mechanism.

It belongs to the LipB family.

The protein localises to the cytoplasm. The catalysed reaction is octanoyl-[ACP] + L-lysyl-[protein] = N(6)-octanoyl-L-lysyl-[protein] + holo-[ACP] + H(+). Its pathway is protein modification; protein lipoylation via endogenous pathway; protein N(6)-(lipoyl)lysine from octanoyl-[acyl-carrier-protein]: step 1/2. Functionally, catalyzes the transfer of endogenously produced octanoic acid from octanoyl-acyl-carrier-protein onto the lipoyl domains of lipoate-dependent enzymes. Lipoyl-ACP can also act as a substrate although octanoyl-ACP is likely to be the physiological substrate. The chain is Octanoyltransferase from Xanthomonas campestris pv. campestris (strain B100).